Here is a 221-residue protein sequence, read N- to C-terminus: Glutathione S-transferase (221 aa).

The residue at position 1 (Met1) is an N-acetylmethionine. Ala2 bears the N-acetylalanine; in Glutathione S-transferase, N-terminally processed mark. Residues 3–82 (GEQNIKYFNI…YIAEKYNLLG (80 aa)) enclose the GST N-terminal domain. Residues Tyr9, Lys45, 53–54 (QV), and 66–67 (QT) each bind glutathione. A GST C-terminal domain is found at 84–208 (DMKEHAQIIM…PGSKRKPVPD (125 aa)).

This sequence belongs to the GST superfamily. Alpha family. In terms of assembly, homodimer or heterodimer of GSTA1 and GSTA2.

The protein localises to the cytoplasm. The enzyme catalyses RX + glutathione = an S-substituted glutathione + a halide anion + H(+). It carries out the reaction prostaglandin A2 + glutathione = prostaglandin A2-S-(R)-glutathione. The catalysed reaction is prostaglandin J2 + glutathione = prostaglandin J2-S-(R)-glutathione. It catalyses the reaction (13S)-hydroperoxy-(9Z,11E)-octadecadienoate + 2 glutathione = (13S)-hydroxy-(9Z,11E)-octadecadienoate + glutathione disulfide + H2O. The enzyme catalyses androst-5-ene-3,17-dione = androst-4-ene-3,17-dione. In terms of biological role, glutathione S-transferase that catalyzes the nucleophilic attack of the sulfur atom of glutathione on the electrophilic groups of a wide range of exogenous and endogenous compounds. Involved in the formation of glutathione conjugates of both prostaglandin A2 (PGA2) and prostaglandin J2 (PGJ2). It also catalyzes the isomerization of D5-androstene-3,17-dione (AD) into D4-androstene-3,17-dione and may therefore play an important role in hormone biosynthesis. Through its glutathione-dependent peroxidase activity toward the fatty acid hydroperoxide (13S)-hydroperoxy-(9Z,11E)-octadecadienoate/13-HPODE it is also involved in the metabolism of oxidized linoleic acid. In Antechinus stuartii (Brown marsupial mouse), this protein is Glutathione S-transferase.